The primary structure comprises 975 residues: Glycine dehydrogenase (decarboxylating) (975 aa).

Lys-723 is modified (N6-(pyridoxal phosphate)lysine).

It belongs to the GcvP family. In terms of assembly, the glycine cleavage system is composed of four proteins: P, T, L and H. It depends on pyridoxal 5'-phosphate as a cofactor.

It catalyses the reaction N(6)-[(R)-lipoyl]-L-lysyl-[glycine-cleavage complex H protein] + glycine + H(+) = N(6)-[(R)-S(8)-aminomethyldihydrolipoyl]-L-lysyl-[glycine-cleavage complex H protein] + CO2. Functionally, the glycine cleavage system catalyzes the degradation of glycine. The P protein binds the alpha-amino group of glycine through its pyridoxal phosphate cofactor; CO(2) is released and the remaining methylamine moiety is then transferred to the lipoamide cofactor of the H protein. The chain is Glycine dehydrogenase (decarboxylating) from Burkholderia ambifaria (strain ATCC BAA-244 / DSM 16087 / CCUG 44356 / LMG 19182 / AMMD) (Burkholderia cepacia (strain AMMD)).